The chain runs to 370 residues: DNA primase small subunit PriS (370 aa).

Catalysis depends on residues D92, D94, and D272.

Belongs to the eukaryotic-type primase small subunit family. As to quaternary structure, heterodimer of a small subunit (PriS) and a large subunit (PriL). Requires Mg(2+) as cofactor. The cofactor is Mn(2+).

Catalytic subunit of DNA primase, an RNA polymerase that catalyzes the synthesis of short RNA molecules used as primers for DNA polymerase during DNA replication. The small subunit contains the primase catalytic core and has DNA synthesis activity on its own. Binding to the large subunit stabilizes and modulates the activity, increasing the rate of DNA synthesis while decreasing the length of the DNA fragments, and conferring RNA synthesis capability. The DNA polymerase activity may enable DNA primase to also catalyze primer extension after primer synthesis. May also play a role in DNA repair. In Picrophilus torridus (strain ATCC 700027 / DSM 9790 / JCM 10055 / NBRC 100828 / KAW 2/3), this protein is DNA primase small subunit PriS.